The following is a 452-amino-acid chain: tRNA modification GTPase MnmE (452 aa).

(6S)-5-formyl-5,6,7,8-tetrahydrofolate-binding residues include Arg21, Glu78, and Lys118. Positions 214-375 (GMKVVIAGRP…LREHLKQAMG (162 aa)) constitute a TrmE-type G domain. Residue Asn224 participates in K(+) binding. Residues 224–229 (NAGKSS), 243–249 (TDIAGTT), and 268–271 (DTAG) each bind GTP. Ser228 is a binding site for Mg(2+). Positions 243, 245, and 248 each coordinate K(+). Thr249 provides a ligand contact to Mg(2+). A (6S)-5-formyl-5,6,7,8-tetrahydrofolate-binding site is contributed by Lys452.

It belongs to the TRAFAC class TrmE-Era-EngA-EngB-Septin-like GTPase superfamily. TrmE GTPase family. As to quaternary structure, homodimer. Heterotetramer of two MnmE and two MnmG subunits. K(+) serves as cofactor.

It is found in the cytoplasm. Its function is as follows. Exhibits a very high intrinsic GTPase hydrolysis rate. Involved in the addition of a carboxymethylaminomethyl (cmnm) group at the wobble position (U34) of certain tRNAs, forming tRNA-cmnm(5)s(2)U34. The protein is tRNA modification GTPase MnmE of Haemophilus influenzae (strain PittGG).